A 367-amino-acid chain; its full sequence is NADH-quinone oxidoreductase subunit H (367 aa).

8 helical membrane passes run 19-39 (ALFI…AYLV), 87-107 (ICFL…WAVI), 132-152 (IGVL…IIAG), 178-198 (IGLT…GEIV), 204-224 (MPYW…ISAL), 266-286 (ILIN…PLNI), 291-311 (IIPG…CFIW), and 328-348 (GWKV…SILV).

This sequence belongs to the complex I subunit 1 family. NDH-1 is composed of 14 different subunits. Subunits NuoA, H, J, K, L, M, N constitute the membrane sector of the complex.

It localises to the cell inner membrane. The catalysed reaction is a quinone + NADH + 5 H(+)(in) = a quinol + NAD(+) + 4 H(+)(out). NDH-1 shuttles electrons from NADH, via FMN and iron-sulfur (Fe-S) centers, to quinones in the respiratory chain. The immediate electron acceptor for the enzyme in this species is believed to be ubiquinone. Couples the redox reaction to proton translocation (for every two electrons transferred, four hydrogen ions are translocated across the cytoplasmic membrane), and thus conserves the redox energy in a proton gradient. This subunit may bind ubiquinone. The protein is NADH-quinone oxidoreductase subunit H of Ehrlichia chaffeensis (strain ATCC CRL-10679 / Arkansas).